The sequence spans 503 residues: Cytochrome P450 3A17 (503 aa).

C442 is a heme binding site.

This sequence belongs to the cytochrome P450 family. Heme is required as a cofactor.

It is found in the endoplasmic reticulum membrane. The protein localises to the microsome membrane. It catalyses the reaction an organic molecule + reduced [NADPH--hemoprotein reductase] + O2 = an alcohol + oxidized [NADPH--hemoprotein reductase] + H2O + H(+). Cytochromes P450 are a group of heme-thiolate monooxygenases. In liver microsomes, this enzyme is involved in an NADPH-dependent electron transport pathway. It oxidizes a variety of structurally unrelated compounds, including steroids, fatty acids, and xenobiotics. This chain is Cytochrome P450 3A17 (CYP3A17), found in Cavia porcellus (Guinea pig).